We begin with the raw amino-acid sequence, 316 residues long: ATP synthase gamma chain (316 aa).

The protein belongs to the ATPase gamma chain family. In terms of assembly, F-type ATPases have 2 components, CF(1) - the catalytic core - and CF(0) - the membrane proton channel. CF(1) has five subunits: alpha(3), beta(3), gamma(1), delta(1), epsilon(1). CF(0) has three main subunits: a, b and c.

It is found in the cellular thylakoid membrane. Its function is as follows. Produces ATP from ADP in the presence of a proton gradient across the membrane. The gamma chain is believed to be important in regulating ATPase activity and the flow of protons through the CF(0) complex. This is ATP synthase gamma chain from Synechococcus elongatus (strain ATCC 33912 / PCC 7942 / FACHB-805) (Anacystis nidulans R2).